We begin with the raw amino-acid sequence, 428 residues long: MEHLLKTDPEVFDAVVKEYERQFYNLEMIASENFTSLAVMEATGSVLTNKYAEGLPGKRYYGGCEYVDVVENLAIERAKKLFGAEHANVQPHSGSQANMAVYFAVLNPGDTIMGMDLAHGGHLTHGAKVNFSGKLYNVIHYGVNPETELIDYDQLYKLAKEHKPKLIVGGASAYPRVFDWAKMREIADEVGALFMVDMAHYAGLIAGGVYPNPVPYAQFVTSTTHKTLRGPRSGFILTTKEYAKAVDKSVFPGIQGGPLMHVIAAKAVAFKEAMSEEFKEYAKQVVENARVLAEELKKYGFKIVTGGTDSHIVLVDLRNKNIIGKDAEKALEKAGITVNKNAVPFDPLPPTKTSGIRIGTAALTTRGMKEDEMRKIAGWINEVLSNMDDEKTIQRVRQEVRELCETFPLYPELKRRIDELRSGKATDL.

(6S)-5,6,7,8-tetrahydrofolate is bound by residues Leu-117 and 121-123 (GHL). Position 226 is an N6-(pyridoxal phosphate)lysine (Lys-226).

It belongs to the SHMT family. In terms of assembly, homodimer. Requires pyridoxal 5'-phosphate as cofactor.

It localises to the cytoplasm. The enzyme catalyses (6R)-5,10-methylene-5,6,7,8-tetrahydrofolate + glycine + H2O = (6S)-5,6,7,8-tetrahydrofolate + L-serine. Its pathway is one-carbon metabolism; tetrahydrofolate interconversion. The protein operates within amino-acid biosynthesis; glycine biosynthesis; glycine from L-serine: step 1/1. Its function is as follows. Catalyzes the reversible interconversion of serine and glycine with tetrahydrofolate (THF) serving as the one-carbon carrier. This reaction serves as the major source of one-carbon groups required for the biosynthesis of purines, thymidylate, methionine, and other important biomolecules. Also exhibits THF-independent aldolase activity toward beta-hydroxyamino acids, producing glycine and aldehydes, via a retro-aldol mechanism. This is Serine hydroxymethyltransferase from Aquifex aeolicus (strain VF5).